The sequence spans 121 residues: Large ribosomal subunit protein bL12 (121 aa).

This sequence belongs to the bacterial ribosomal protein bL12 family. As to quaternary structure, homodimer. Part of the ribosomal stalk of the 50S ribosomal subunit. Forms a multimeric L10(L12)X complex, where L10 forms an elongated spine to which 2 to 4 L12 dimers bind in a sequential fashion. Binds GTP-bound translation factors.

Functionally, forms part of the ribosomal stalk which helps the ribosome interact with GTP-bound translation factors. Is thus essential for accurate translation. This chain is Large ribosomal subunit protein bL12, found in Lactobacillus delbrueckii subsp. bulgaricus (strain ATCC BAA-365 / Lb-18).